The sequence spans 362 residues: MATPSKKRCGVLGATGAVGTRFILLLSQHPLLELVAVGASDRSSGKKYRDAVRWKQSAPMPAKVADLTVRCCDPAEFSDCDIIFSGLDPDAAGEIEMAFLKANFAVFSNAKNYRLDPMVPLVVPLVNAGHIDVIPAQRKHFGLDKGMLVCNSNCAVVGLVVPAKALIQKFGPIESVSMVTMQAVSGAGYPGVSSMDIFDNIVPYIPGEEGKISSEARKILGDLNSDLAGFSDQKPLQISVACNRVPVLDGHTVCASLRFVNRPPPTASQVREALREYKPEVQTLGCPSAPKMSIHVMDEVDRPQPRLDRETEGGYACTVGRIREDDSDVFDIQFVALSHNTVLGASGSSILNAESAILKGFV.

T15, G16, A17, V18, S40, S43, L87, and D88 together coordinate NADP(+). C154 functions as the Acyl-thioester intermediate in the catalytic mechanism. G186 is an NADP(+) binding site. H251 serves as the catalytic Proton acceptor. Residue N340 coordinates NADP(+).

This sequence belongs to the aspartate-semialdehyde dehydrogenase family. Homotetramer; dimer of dimers.

The protein resides in the cytoplasm. It localises to the cytosol. It is found in the nucleus. The enzyme catalyses L-aspartate 4-semialdehyde + phosphate + NADP(+) = 4-phospho-L-aspartate + NADPH + H(+). Its pathway is amino-acid biosynthesis; L-methionine biosynthesis via de novo pathway; L-homoserine from L-aspartate: step 2/3. It participates in amino-acid biosynthesis; L-threonine biosynthesis; L-threonine from L-aspartate: step 2/5. Functionally, catalyzes the NADPH-dependent formation of L-aspartate 4-semialdehyde (L-ASA) by the reductive dephosphorylation of 4-phospho-L-aspartate. Mediates the second step in the biosynthesis of amino acids that derive from aspartate (the aspartate family of amino acids), including methioinine and threonine, the latter of which is a precursor to isoleucine. This Trichophyton rubrum (strain ATCC MYA-4607 / CBS 118892) (Athlete's foot fungus) protein is Aspartate-semialdehyde dehydrogenase.